A 359-amino-acid chain; its full sequence is Endoglucanase 1 (359 aa).

Disordered regions lie at residues 1–26 and 47–72; these read MENP…RGGR and TGAS…DAGT. Residues 13–24 show a composition bias toward basic residues; it reads LRRRRSERRARG. The segment covering 60–72 has biased composition (low complexity); that stretch reads APSADSGTADAGT. Residue Asp-154 is part of the active site. A disulfide bridge links Cys-155 with Cys-199. Asp-192 functions as the Proton donor in the catalytic mechanism. Asp-339 (nucleophile) is an active-site residue.

Belongs to the glycosyl hydrolase 6 (cellulase B) family.

It catalyses the reaction Endohydrolysis of (1-&gt;4)-beta-D-glucosidic linkages in cellulose, lichenin and cereal beta-D-glucans.. Functionally, CMCase I preferentially hydrolyzes carboxymethyl cellulose (CMC). The protein is Endoglucanase 1 (casA) of Streptomyces sp. (strain KSM-9).